Reading from the N-terminus, the 94-residue chain is Small ribosomal subunit protein uS19 (94 aa).

This sequence belongs to the universal ribosomal protein uS19 family.

Functionally, protein S19 forms a complex with S13 that binds strongly to the 16S ribosomal RNA. In Wolbachia pipientis wMel, this protein is Small ribosomal subunit protein uS19.